Here is a 228-residue protein sequence, read N- to C-terminus: Adenosylcobinamide-GDP ribazoletransferase (228 aa).

The next 6 helical transmembrane spans lie at 24–44, 50–70, 96–116, 117–137, 159–176, and 181–198; these read VWMLPLLTPLTAFIPSLILYL, NVLSILSLYWVIGLLHLDGLA, IAGTFAVVMILLIQVYSLFSA, PFYSIYLAELNSKMAMLLALA, VFLGGVLYALLLIPILLY, and IFALLGLVGGIYAVKISL.

Belongs to the CobS family. Mg(2+) is required as a cofactor.

Its subcellular location is the cell membrane. It catalyses the reaction alpha-ribazole + adenosylcob(III)inamide-GDP = adenosylcob(III)alamin + GMP + H(+). It carries out the reaction alpha-ribazole 5'-phosphate + adenosylcob(III)inamide-GDP = adenosylcob(III)alamin 5'-phosphate + GMP + H(+). The protein operates within cofactor biosynthesis; adenosylcobalamin biosynthesis; adenosylcobalamin from cob(II)yrinate a,c-diamide: step 7/7. In terms of biological role, joins adenosylcobinamide-GDP and alpha-ribazole to generate adenosylcobalamin (Ado-cobalamin). Also synthesizes adenosylcobalamin 5'-phosphate from adenosylcobinamide-GDP and alpha-ribazole 5'-phosphate. In Pyrococcus furiosus (strain ATCC 43587 / DSM 3638 / JCM 8422 / Vc1), this protein is Adenosylcobinamide-GDP ribazoletransferase.